The primary structure comprises 91 residues: Large ribosomal subunit protein bL28 (91 aa).

The tract at residues 1–23 (MSRVCELTGKGPMSGNNVSHANN) is disordered.

It belongs to the bacterial ribosomal protein bL28 family.

This chain is Large ribosomal subunit protein bL28, found in Paracoccus denitrificans (strain Pd 1222).